We begin with the raw amino-acid sequence, 332 residues long: Olfactory receptor 10G6 (332 aa).

At 1 to 46 (MLEGVEHLLLLLLLTDVNSKELQSGNQTSVSHFILVGLHHPPQLGA) the chain is on the extracellular side. N26 carries an N-linked (GlcNAc...) asparagine glycan. Residues 47-67 (PLFLAFLVIYLLTVSGNGLII) traverse the membrane as a helical segment. At 68-75 (LTVLVDIR) the chain is on the cytoplasmic side. A helical membrane pass occupies residues 76 to 96 (LHRPMCLFLCHLSFLDMTISC). Topologically, residues 97 to 120 (AIVPKMLAGFLLGSRIISFGGCVI) are extracellular. C118 and C210 are disulfide-bonded. The helical transmembrane segment at 121–141 (QLFSFHFLGCTECFLYTLMAY) threads the bilayer. Residues 142 to 160 (DRFLAICKPLHYATIMTHR) lie on the Cytoplasmic side of the membrane. Residues 161–181 (VCNSLALGTWLGGTIHSLFQT) traverse the membrane as a helical segment. The Extracellular segment spans residues 182–218 (SFVFRLPFCGPNRVDYIFCDIPAMLRLACADTAINEL). The chain crosses the membrane as a helical span at residues 219–238 (VTFADIGFLALTCFMLILTS). Topologically, residues 239 to 258 (YGYIVAAILRIPSADGRRNA) are cytoplasmic. A helical membrane pass occupies residues 259–279 (FSTCAAHLTVVIVYYVPCTFI). Over 280–290 (YLRPCSQEPLD) the chain is Extracellular. Residues 291–311 (GVVAVFYTVITPLLNSIIYTL) traverse the membrane as a helical segment. At 312-332 (CNKEMKAALQRLGGHKEVQPH) the chain is on the cytoplasmic side.

It belongs to the G-protein coupled receptor 1 family.

The protein localises to the cell membrane. Its function is as follows. Odorant receptor. The sequence is that of Olfactory receptor 10G6 (OR10G6) from Homo sapiens (Human).